The sequence spans 399 residues: Acetate kinase (399 aa).

Asn9 contributes to the Mg(2+) binding site. Lys16 is a binding site for ATP. Arg90 contributes to the substrate binding site. Asp147 acts as the Proton donor/acceptor in catalysis. ATP-binding positions include 207-211, 282-284, and 330-334; these read HIGNG, DLR, and GVGEN. A Mg(2+)-binding site is contributed by Glu384.

This sequence belongs to the acetokinase family. Homodimer. Mg(2+) serves as cofactor. The cofactor is Mn(2+).

The protein localises to the cytoplasm. It carries out the reaction acetate + ATP = acetyl phosphate + ADP. The protein operates within metabolic intermediate biosynthesis; acetyl-CoA biosynthesis; acetyl-CoA from acetate: step 1/2. Catalyzes the formation of acetyl phosphate from acetate and ATP. Can also catalyze the reverse reaction. The chain is Acetate kinase from Staphylococcus saprophyticus subsp. saprophyticus (strain ATCC 15305 / DSM 20229 / NCIMB 8711 / NCTC 7292 / S-41).